The sequence spans 80 residues: Protein FAM229B (80 aa).

The disordered stretch occupies residues 1-45 (MPFRFGTQPRRFPVEGGDSSIELESGLSSSASCNGKETSPNRQLR). Over residues 15-32 (EGGDSSIELESGLSSSAS) the composition is skewed to low complexity. The span at 33 to 42 (CNGKETSPNR) shows a compositional bias: polar residues.

It belongs to the FAM229 family.

This chain is Protein FAM229B (Fam229b), found in Rattus norvegicus (Rat).